Reading from the N-terminus, the 168-residue chain is Pathogenesis-related protein 1C (168 aa).

A signal peptide spans 1 to 30; it reads MEFVLFSQMSSFFLVSTLLLFLIISHSCHA. The region spanning 38–156 is the SCP domain; the sequence is LDAHNTARAD…NGGYIVSCNY (119 aa).

The protein belongs to the CRISP family. Three disulfide bonds are present.

The protein resides in the vacuole. In terms of biological role, probably involved in the defense reaction of plants against pathogens. This chain is Pathogenesis-related protein 1C, found in Nicotiana tabacum (Common tobacco).